A 222-amino-acid polypeptide reads, in one-letter code: UPF0128 protein TK2294 (222 aa).

Belongs to the UPF0128 family.

The polypeptide is UPF0128 protein TK2294 (Thermococcus kodakarensis (strain ATCC BAA-918 / JCM 12380 / KOD1) (Pyrococcus kodakaraensis (strain KOD1))).